We begin with the raw amino-acid sequence, 334 residues long: Glyceraldehyde-3-phosphate dehydrogenase (334 aa).

NAD(+) is bound by residues 12-13 (TI) and Gly111. 140–142 (SCN) is a D-glyceraldehyde 3-phosphate binding site. Catalysis depends on Cys141, which acts as the Nucleophile. Residue Arg167 participates in NAD(+) binding. 192–193 (HG) serves as a coordination point for D-glyceraldehyde 3-phosphate. Gln298 contacts NAD(+).

The protein belongs to the glyceraldehyde-3-phosphate dehydrogenase family. Homotetramer.

The protein resides in the cytoplasm. It carries out the reaction D-glyceraldehyde 3-phosphate + phosphate + NADP(+) = (2R)-3-phospho-glyceroyl phosphate + NADPH + H(+). The enzyme catalyses D-glyceraldehyde 3-phosphate + phosphate + NAD(+) = (2R)-3-phospho-glyceroyl phosphate + NADH + H(+). The protein operates within carbohydrate degradation; glycolysis; pyruvate from D-glyceraldehyde 3-phosphate: step 1/5. The sequence is that of Glyceraldehyde-3-phosphate dehydrogenase from Thermococcus sibiricus (strain DSM 12597 / MM 739).